We begin with the raw amino-acid sequence, 493 residues long: 3-octaprenyl-4-hydroxybenzoate carboxy-lyase (493 aa).

N175 provides a ligand contact to Mn(2+). Prenylated FMN is bound by residues 178-180 (IYR), 192-194 (RWL), and 197-198 (RG). E241 provides a ligand contact to Mn(2+). D290 (proton donor) is an active-site residue.

This sequence belongs to the UbiD family. In terms of assembly, homohexamer. Prenylated FMN is required as a cofactor. It depends on Mn(2+) as a cofactor.

It localises to the cell membrane. The catalysed reaction is a 4-hydroxy-3-(all-trans-polyprenyl)benzoate + H(+) = a 2-(all-trans-polyprenyl)phenol + CO2. It functions in the pathway cofactor biosynthesis; ubiquinone biosynthesis. Its function is as follows. Catalyzes the decarboxylation of 3-octaprenyl-4-hydroxy benzoate to 2-octaprenylphenol, an intermediate step in ubiquinone biosynthesis. This Photorhabdus laumondii subsp. laumondii (strain DSM 15139 / CIP 105565 / TT01) (Photorhabdus luminescens subsp. laumondii) protein is 3-octaprenyl-4-hydroxybenzoate carboxy-lyase.